The chain runs to 391 residues: Na(+)/H(+) antiporter NhaA 2 (391 aa).

A run of 11 helical transmembrane segments spans residues 25 to 45, 56 to 76, 98 to 118, 128 to 148, 157 to 177, 180 to 200, 208 to 228, 264 to 284, 297 to 317, 335 to 355, and 364 to 384; these read AGGI…NSPL, VWLG…IFFL, ALPG…YIAI, GWAI…SLLG, VFLA…IAFF, SGLN…LVAL, LLPY…SGVH, VAFA…LSGI, VALG…VLAI, GVAI…NLAF, and EVKV…IVLL.

This sequence belongs to the NhaA Na(+)/H(+) (TC 2.A.33) antiporter family.

Its subcellular location is the cell inner membrane. It carries out the reaction Na(+)(in) + 2 H(+)(out) = Na(+)(out) + 2 H(+)(in). In terms of biological role, na(+)/H(+) antiporter that extrudes sodium in exchange for external protons. The chain is Na(+)/H(+) antiporter NhaA 2 from Pseudomonas syringae pv. tomato (strain ATCC BAA-871 / DC3000).